A 962-amino-acid polypeptide reads, in one-letter code: Glycine dehydrogenase (decarboxylating) (962 aa).

At Lys-709 the chain carries N6-(pyridoxal phosphate)lysine.

It belongs to the GcvP family. In terms of assembly, the glycine cleavage system is composed of four proteins: P, T, L and H. It depends on pyridoxal 5'-phosphate as a cofactor.

The enzyme catalyses N(6)-[(R)-lipoyl]-L-lysyl-[glycine-cleavage complex H protein] + glycine + H(+) = N(6)-[(R)-S(8)-aminomethyldihydrolipoyl]-L-lysyl-[glycine-cleavage complex H protein] + CO2. In terms of biological role, the glycine cleavage system catalyzes the degradation of glycine. The P protein binds the alpha-amino group of glycine through its pyridoxal phosphate cofactor; CO(2) is released and the remaining methylamine moiety is then transferred to the lipoamide cofactor of the H protein. The polypeptide is Glycine dehydrogenase (decarboxylating) (Shewanella baltica (strain OS223)).